A 476-amino-acid polypeptide reads, in one-letter code: Glutamyl-tRNA(Gln) amidotransferase subunit A (476 aa).

Active-site charge relay system residues include Lys70 and Ser145. Residue Ser169 is the Acyl-ester intermediate of the active site.

The protein belongs to the amidase family. GatA subfamily. Heterotrimer of A, B and C subunits.

It carries out the reaction L-glutamyl-tRNA(Gln) + L-glutamine + ATP + H2O = L-glutaminyl-tRNA(Gln) + L-glutamate + ADP + phosphate + H(+). In terms of biological role, allows the formation of correctly charged Gln-tRNA(Gln) through the transamidation of misacylated Glu-tRNA(Gln) in organisms which lack glutaminyl-tRNA synthetase. The reaction takes place in the presence of glutamine and ATP through an activated gamma-phospho-Glu-tRNA(Gln). The chain is Glutamyl-tRNA(Gln) amidotransferase subunit A from Methanosarcina acetivorans (strain ATCC 35395 / DSM 2834 / JCM 12185 / C2A).